The following is a 1603-amino-acid chain: GATOR1 complex protein DEPDC5 (1603 aa).

Disordered stretches follow at residues 427 to 450, 484 to 527, and 696 to 720; these read GKKPASEKAKNGRDTSLGSPKESE, VRER…SSLG, and LSNSGAGMNPRTQNKDSLEDSVSTS. Residues 430-439 are compositionally biased toward basic and acidic residues; that stretch reads PASEKAKNGR. The segment covering 494–508 has biased composition (low complexity); the sequence is SASSCDVSSSPSLPS. S505 is subject to Phosphoserine. Polar residues-rich tracts occupy residues 518 to 527 and 696 to 707; these read SQASDDSSLG and LSNSGAGMNPRT. A Phosphoserine; by PIM1 modification is found at S1002. Polar residues predominate over residues 1135 to 1153; that stretch reads DRGNSQTFGNSQNIGEQGY. Residues 1135–1165 form a disordered region; that stretch reads DRGNSQTFGNSQNIGEQGYSSTNSSDSSSQQ. Low complexity predominate over residues 1154 to 1165; sequence SSTNSSDSSSQQ. The region spanning 1187–1262 is the DEP domain; the sequence is PSTGVQLLSE…YGFYFYKIVT (76 aa). Phosphoserine; by PKB/AKT1 and PIM1 is present on S1530.

Belongs to the IML1 family. Within the GATOR complex, component of the GATOR1 subcomplex, made of DEPDC5, NPRL2 and NPRL3. GATOR1 mediates the strong interaction of the GATOR complex with small GTPases Rag (RagA/RRAGA, RagB/RRAGB, RagC/RRAGC and/or RagD/RRAGD) heterodimers. Interacts with SAMTOR; interaction is direct and takes place in presence of methionine, leading to inhibit the activity of the GATOR1 complex. Phosphorylation at Ser-1002 and Ser-1530 by AKT1 and PIM1 inhibit the activity of DEPDC5, releasing inhibition of the mTORC1 pathway. In terms of processing, ubiquitinated. Amino acid-induced 'Lys-48'-linked polyubiquitination of DEPDC5 by the BCR(KLHL22) ubiquitin ligase complex leads to DEPDC5 proteasomal degradation and inhibition of the GATOR1 complex. Ubiquitination may occur at multiple lysines. Expressed in developing and adult brain.

It is found in the lysosome membrane. The protein resides in the cytoplasm. The protein localises to the cytosol. It localises to the perinuclear region. As a component of the GATOR1 complex functions as an inhibitor of the amino acid-sensing branch of the mTORC1 pathway. In response to amino acid depletion, the GATOR1 complex has GTPase activating protein (GAP) activity and strongly increases GTP hydrolysis by RagA/RRAGA (or RagB/RRAGB) within heterodimeric Rag complexes, thereby turning them into their inactive GDP-bound form, releasing mTORC1 from lysosomal surface and inhibiting mTORC1 signaling. In the presence of abundant amino acids, the GATOR1 complex is negatively regulated by GATOR2, the other GATOR subcomplex, in this amino acid-sensing branch of the TORC1 pathway. Within the GATOR1 complex, DEPDC5 mediates direct interaction with the nucleotide-binding pocket of small GTPases Rag (RagA/RRAGA, RagB/RRAGB, RagC/RRAGC and/or RagD/RRAGD) and coordinates their nucleotide loading states by promoting RagA/RRAGA or RagB/RRAGB into their GDP-binding state and RagC/RRAGC or RagD/RRAGD into their GTP-binding state. However, it does not execute the GAP activity, which is mediated by NPRL2. The chain is GATOR1 complex protein DEPDC5 from Homo sapiens (Human).